The following is a 127-amino-acid chain: MKVFKKLHNLNEILLLISIFFLVCIISLVGIGIIFDLIRKASLSAIRSDPIFFNLRAVLIVLGVFAICFMIIQLVISIMIWKTINTACENIEPKFKKILHWSCFLPFGLLQLYCYQKIKLVKQADNL.

The next 2 helical transmembrane spans lie at 13–35 and 57–81; these read ILLLISIFFLVCIISLVGIGIIF and AVLIVLGVFAICFMIIQLVISIMIW.

The protein resides in the cell membrane. This is an uncharacterized protein from Mycoplasma genitalium (strain ATCC 33530 / DSM 19775 / NCTC 10195 / G37) (Mycoplasmoides genitalium).